The primary structure comprises 476 residues: Sulfate adenylyltransferase subunit 1 (476 aa).

Residues 24-241 (KSLLRFLTCG…EDVDFVQEQE (218 aa)) form the tr-type G domain. A G1 region spans residues 33–40 (GSVDDGKS). 33-40 (GSVDDGKS) serves as a coordination point for GTP. Positions 91 to 95 (GITID) are G2. The G3 stretch occupies residues 112–115 (DTPG). Residues 112 to 116 (DTPGH) and 167 to 170 (NKMD) each bind GTP. The segment at 167–170 (NKMD) is G4. The tract at residues 205-207 (SAL) is G5.

The protein belongs to the TRAFAC class translation factor GTPase superfamily. Classic translation factor GTPase family. CysN/NodQ subfamily. In terms of assembly, heterodimer composed of CysD, the smaller subunit, and CysN.

It carries out the reaction sulfate + ATP + H(+) = adenosine 5'-phosphosulfate + diphosphate. Its pathway is sulfur metabolism; hydrogen sulfide biosynthesis; sulfite from sulfate: step 1/3. Its function is as follows. With CysD forms the ATP sulfurylase (ATPS) that catalyzes the adenylation of sulfate producing adenosine 5'-phosphosulfate (APS) and diphosphate, the first enzymatic step in sulfur assimilation pathway. APS synthesis involves the formation of a high-energy phosphoric-sulfuric acid anhydride bond driven by GTP hydrolysis by CysN coupled to ATP hydrolysis by CysD. The sequence is that of Sulfate adenylyltransferase subunit 1 from Photobacterium profundum (strain SS9).